The chain runs to 150 residues: Probable antibacterial peptide (150 aa).

The signal sequence occupies residues 1–19 (MHIARFCLLSSMAVLALSA).

The protein localises to the secreted. Functionally, has antibacterial activity in vitro. This Riptortus clavatus (Bean bug) protein is Probable antibacterial peptide.